The sequence spans 327 residues: Ornithine carbamoyltransferase, mitochondrial (327 aa).

Residues 63-66 (STRT), arginine 114, histidine 141, and glutamine 144 contribute to the carbamoyl phosphate site. Asparagine 172, aspartate 236, serine 240, and methionine 241 together coordinate L-ornithine. Catalysis depends on cysteine 276, which acts as the Proton acceptor. Carbamoyl phosphate-binding positions include 276 to 277 (CL) and arginine 303.

Belongs to the aspartate/ornithine carbamoyltransferase superfamily. OTCase family. As to quaternary structure, interacts with trx2.

Its subcellular location is the mitochondrion matrix. The enzyme catalyses carbamoyl phosphate + L-ornithine = L-citrulline + phosphate + H(+). It participates in amino-acid biosynthesis; L-arginine biosynthesis; L-arginine from L-ornithine and carbamoyl phosphate: step 1/3. In terms of biological role, ornithine carbamoyltransferase involved in the synthesis of arginine from glutamate via ornithine and the urea cycle. In Schizosaccharomyces pombe (strain 972 / ATCC 24843) (Fission yeast), this protein is Ornithine carbamoyltransferase, mitochondrial (arg3).